A 377-amino-acid polypeptide reads, in one-letter code: Succinyl-diaminopimelate desuccinylase (377 aa).

Zn(2+) is bound at residue H68. Residue D70 is part of the active site. Position 101 (D101) interacts with Zn(2+). E135 (proton acceptor) is an active-site residue. Zn(2+)-binding residues include E136, E164, and H350.

Belongs to the peptidase M20A family. DapE subfamily. As to quaternary structure, homodimer. It depends on Zn(2+) as a cofactor. The cofactor is Co(2+).

The catalysed reaction is N-succinyl-(2S,6S)-2,6-diaminopimelate + H2O = (2S,6S)-2,6-diaminopimelate + succinate. The protein operates within amino-acid biosynthesis; L-lysine biosynthesis via DAP pathway; LL-2,6-diaminopimelate from (S)-tetrahydrodipicolinate (succinylase route): step 3/3. Catalyzes the hydrolysis of N-succinyl-L,L-diaminopimelic acid (SDAP), forming succinate and LL-2,6-diaminopimelate (DAP), an intermediate involved in the bacterial biosynthesis of lysine and meso-diaminopimelic acid, an essential component of bacterial cell walls. The sequence is that of Succinyl-diaminopimelate desuccinylase from Acinetobacter baumannii (strain SDF).